The primary structure comprises 113 residues: DNA-directed RNA polymerase subunit Rpo4 (113 aa).

It belongs to the eukaryotic RPB4 RNA polymerase subunit family. As to quaternary structure, part of the 13-subunit RNA polymerase complex. Forms a stalk with Rpo7 that extends from the main structure.

It localises to the cytoplasm. The enzyme catalyses RNA(n) + a ribonucleoside 5'-triphosphate = RNA(n+1) + diphosphate. Its function is as follows. DNA-dependent RNA polymerase (RNAP) catalyzes the transcription of DNA into RNA using the four ribonucleoside triphosphates as substrates. This subunit is less well bound than the others. This chain is DNA-directed RNA polymerase subunit Rpo4, found in Saccharolobus solfataricus (strain ATCC 35092 / DSM 1617 / JCM 11322 / P2) (Sulfolobus solfataricus).